Consider the following 42-residue polypeptide: Photosystem I reaction center subunit IX (42 aa).

A helical transmembrane segment spans residues 7-27 (YLSTAPVLSALWFAILAGLLI).

Belongs to the PsaJ family.

Its subcellular location is the plastid. It localises to the chloroplast thylakoid membrane. Functionally, may help in the organization of the PsaE and PsaF subunits. The polypeptide is Photosystem I reaction center subunit IX (Chlorokybus atmophyticus (Soil alga)).